Here is a 37-residue protein sequence, read N- to C-terminus: Photosystem I reaction center subunit VIII (37 aa).

The helical transmembrane segment at 9-29 threads the bilayer; the sequence is SILVTLVGLVFPAFAMASLFL.

The protein belongs to the PsaI family.

The protein localises to the plastid. It localises to the chloroplast thylakoid membrane. May help in the organization of the PsaL subunit. The sequence is that of Photosystem I reaction center subunit VIII from Pelargonium hortorum (Common geranium).